A 551-amino-acid chain; its full sequence is Transcription factor 7-like 1-B (551 aa).

Residues 1 to 11 (MPQLNGGGGDE) are compositionally biased toward gly residues. Disordered stretches follow at residues 1–76 (MPQL…DLES), 298–326 (QEPN…KPHI), and 392–525 (GWSA…PPSP). Residues 19–32 (ISFKDEGEQEDKIS) are compositionally biased toward basic and acidic residues. The segment covering 46 to 61 (SSLVSESENNSSSSDS) has biased composition (low complexity). Positions 63–76 (QTERRPQPRADLES) are enriched in basic and acidic residues. Residues 326–394 (IKKPLNAFML…LHSQLYPGWS (69 aa)) constitute a DNA-binding region (HMG box). A compositionally biased stretch (low complexity) spans 449 to 468 (SPATPSAALASPAAPAATHS). Residues 469-478 (EQAQPLSLTT) are compositionally biased toward polar residues. Low complexity predominate over residues 493–505 (SSSSSSSSSSSGL).

It belongs to the TCF/LEF family. As to quaternary structure, interacts with ctnnb1.

The protein localises to the nucleus. In terms of biological role, participates in the Wnt signaling pathway. Probably binds to DNA and acts as a repressor in the absence of ctnnb1, and possibly as an activator in its presence. Regulates anterior-posterior patterning in the neuroectoderm by repressing posterior neural fates. Also required for hindbrain morphogenesis. This Danio rerio (Zebrafish) protein is Transcription factor 7-like 1-B (tcf7l1b).